A 709-amino-acid polypeptide reads, in one-letter code: PP2C-like domain-containing protein CG9801 (709 aa).

Disordered stretches follow at residues 121–222 (DCYG…NSER), 503–530 (LHPS…SRPK), and 678–709 (GGGE…ETNF). Polar residues predominate over residues 130-143 (PPVQVATQNSTRLT). The span at 182–196 (ANLAAASAGTDAGKA) shows a compositional bias: low complexity. Residues 197–217 (NSDQNNRNVLNAKTEVSTDGD) are compositionally biased toward polar residues. A PPM-type phosphatase domain is found at 259-503 (SVSLYETNML…KSASAIYARL (245 aa)).

The protein is PP2C-like domain-containing protein CG9801 of Drosophila melanogaster (Fruit fly).